A 449-amino-acid chain; its full sequence is GTP-binding protein A (449 aa).

Residues 1–77 (MFNINPYKSK…LSSKTENSLS (77 aa)) form a disordered region. Composition is skewed to low complexity over residues 8 to 46 (KSKT…SSSS) and 67 to 77 (SLSSKTENSLS). Residues 149–386 (QNECNVLLLG…FMGHLRAKNK (238 aa)) enclose the AIG1-type G domain. The interval 158 to 165 (GRTGVGKS) is G1. 158 to 165 (GRTGVGKS) serves as a coordination point for GTP. Residues 183–187 (SCTQD) form a G2 region. The tract at residues 204 to 207 (DTPG) is G3. Positions 275–278 (TYAN) are G4. Residues 336–338 (ENS) are G5.

Belongs to the TRAFAC class TrmE-Era-EngA-EngB-Septin-like GTPase superfamily. AIG1/Toc34/Toc159-like paraseptin GTPase family. IAN subfamily.

This Dictyostelium discoideum (Social amoeba) protein is GTP-binding protein A (gtpA).